The following is a 312-amino-acid chain: Methionyl-tRNA formyltransferase (312 aa).

110–113 (SLLP) contributes to the (6S)-5,6,7,8-tetrahydrofolate binding site.

Belongs to the Fmt family.

It carries out the reaction L-methionyl-tRNA(fMet) + (6R)-10-formyltetrahydrofolate = N-formyl-L-methionyl-tRNA(fMet) + (6S)-5,6,7,8-tetrahydrofolate + H(+). Functionally, attaches a formyl group to the free amino group of methionyl-tRNA(fMet). The formyl group appears to play a dual role in the initiator identity of N-formylmethionyl-tRNA by promoting its recognition by IF2 and preventing the misappropriation of this tRNA by the elongation apparatus. This Koribacter versatilis (strain Ellin345) protein is Methionyl-tRNA formyltransferase.